The primary structure comprises 388 residues: Putative F-box protein At3g49520 (388 aa).

An F-box domain is found at Met1–Ser47.

The polypeptide is Putative F-box protein At3g49520 (Arabidopsis thaliana (Mouse-ear cress)).